The sequence spans 277 residues: SF-assemblin (277 aa).

The segment at 1-20 (MATSGMVSPTSGRPFSPMRS) is disordered. The segment at 1–27 (MATSGMVSPTSGRPFSPMRSSVLTTTG) is nonhelical region. The interval 28-277 (SAIKLEHVSE…KMVNMQHNSA (250 aa)) is rod. A coiled-coil region spans residues 70–90 (RLEKSMEAEVKRRAESDKQLQ).

This sequence belongs to the SF-assemblin family. The N-terminus is blocked.

It is found in the cytoplasm. The protein localises to the cytoskeleton. In terms of biological role, major component of the striated microtubule-associated fibers (SMAFs; system-I-fibers). In Dunaliella bioculata (Green alga), this protein is SF-assemblin.